A 315-amino-acid chain; its full sequence is DNA-directed RNA polymerase subunit alpha (315 aa).

An alpha N-terminal domain (alpha-NTD) region spans residues 1-227 (MTQFQIECVE…NLFNPFKKIN (227 aa)). Residues 239 to 315 (EDKISQIPIE…PKRKTNKKEN (77 aa)) form an alpha C-terminal domain (alpha-CTD) region.

The protein belongs to the RNA polymerase alpha chain family. In terms of assembly, in plastids the minimal PEP RNA polymerase catalytic core is composed of four subunits: alpha, beta, beta', and beta''. When a (nuclear-encoded) sigma factor is associated with the core the holoenzyme is formed, which can initiate transcription.

The protein localises to the plastid. It localises to the cyanelle. It catalyses the reaction RNA(n) + a ribonucleoside 5'-triphosphate = RNA(n+1) + diphosphate. In terms of biological role, DNA-dependent RNA polymerase catalyzes the transcription of DNA into RNA using the four ribonucleoside triphosphates as substrates. The polypeptide is DNA-directed RNA polymerase subunit alpha (Cyanophora paradoxa).